The chain runs to 221 residues: Ribosomal RNA large subunit methyltransferase E (221 aa).

S-adenosyl-L-methionine-binding residues include glycine 60, tryptophan 62, aspartate 89, aspartate 105, and aspartate 134. Lysine 174 functions as the Proton acceptor in the catalytic mechanism.

This sequence belongs to the class I-like SAM-binding methyltransferase superfamily. RNA methyltransferase RlmE family.

The protein localises to the cytoplasm. It carries out the reaction uridine(2552) in 23S rRNA + S-adenosyl-L-methionine = 2'-O-methyluridine(2552) in 23S rRNA + S-adenosyl-L-homocysteine + H(+). In terms of biological role, specifically methylates the uridine in position 2552 of 23S rRNA at the 2'-O position of the ribose in the fully assembled 50S ribosomal subunit. This Cupriavidus metallidurans (strain ATCC 43123 / DSM 2839 / NBRC 102507 / CH34) (Ralstonia metallidurans) protein is Ribosomal RNA large subunit methyltransferase E.